A 331-amino-acid polypeptide reads, in one-letter code: Fructose-1,6-bisphosphatase class 1 2 (331 aa).

Residues E91, D112, L114, and D115 each coordinate Mg(2+). Substrate contacts are provided by residues 115–118 (DGSS), N207, Y238, and K268. E274 contributes to the Mg(2+) binding site.

The protein belongs to the FBPase class 1 family. As to quaternary structure, homotetramer. Mg(2+) serves as cofactor.

It localises to the cytoplasm. It catalyses the reaction beta-D-fructose 1,6-bisphosphate + H2O = beta-D-fructose 6-phosphate + phosphate. It participates in carbohydrate biosynthesis; Calvin cycle. This Acaryochloris marina (strain MBIC 11017) protein is Fructose-1,6-bisphosphatase class 1 2.